A 156-amino-acid polypeptide reads, in one-letter code: Large ribosomal subunit protein uL30 (156 aa).

This sequence belongs to the universal ribosomal protein uL30 family. As to quaternary structure, part of the 50S ribosomal subunit.

The polypeptide is Large ribosomal subunit protein uL30 (Thermofilum pendens (strain DSM 2475 / Hrk 5)).